The chain runs to 952 residues: Plasma membrane ATPase 4 (952 aa).

Residues 1–64 are Cytoplasmic-facing; the sequence is MAKAISLEEI…EKNESKILKF (64 aa). The helical transmembrane segment at 65-84 threads the bilayer; the sequence is LGFMWNPLSWVMEAAAVMAI. Topologically, residues 85–96 are extracellular; it reads ALANGDGKPPDW. A helical transmembrane segment spans residues 97–117; that stretch reads QDFIGIICLLVINSTISFIEE. At 118 to 246 the chain is on the cytoplasmic side; it reads NNAGNAAAAL…GHFQKVLTAI (129 aa). Residues 247–267 form a helical membrane-spanning segment; it reads GNFCICSIAIGMLVEIIVMYP. Over 268–277 the chain is Extracellular; sequence IQHRKYRDGI. A helical transmembrane segment spans residues 278–299; that stretch reads DNLLVLLIGGIPIAMPTVLSVT. The Cytoplasmic segment spans residues 300–646; it reads MAIGSHRLSQ…TSRAIFQRMK (347 aa). Asp332 (4-aspartylphosphate intermediate) is an active-site residue. Residues Asp591 and Asp595 each contribute to the Mg(2+) site. A helical membrane pass occupies residues 647–668; that stretch reads NYTIYAVSITIRIVFGFMFIAL. Residues 669 to 673 are Extracellular-facing; it reads IWKYD. Residues 674 to 696 form a helical membrane-spanning segment; it reads FSAFMVLIIAILNDGTIMTISKD. The Cytoplasmic portion of the chain corresponds to 697-712; sequence RVKPSPMPDSWKLKEI. A helical membrane pass occupies residues 713 to 733; the sequence is FATGVVLGGYQALMTVVFFWA. Residues 734–754 are Extracellular-facing; sequence MHDTDFFSDKFGVKSLRNSDE. Residues 755–775 form a helical membrane-spanning segment; the sequence is EMMSALYLQVSIISQALIFVT. Topologically, residues 776–787 are cytoplasmic; it reads RSRSWSFLERPG. A helical membrane pass occupies residues 788 to 808; sequence MLLVIAFMIAQLVATLIAVYA. At 809 to 817 the chain is on the extracellular side; the sequence is NWAFARVKG. Residues 818–838 traverse the membrane as a helical segment; the sequence is CGWGWAGVIWLYSIIFYLPLD. Over 839 to 952 the chain is Cytoplasmic; sequence IMKFAIRYIL…IETIQQHYTV (114 aa).

This sequence belongs to the cation transport ATPase (P-type) (TC 3.A.3) family. Type IIIA subfamily. Expressed at high levels in root, stem, leaf and flower.

It localises to the cell membrane. The enzyme catalyses ATP + H2O + H(+)(in) = ADP + phosphate + 2 H(+)(out). Its function is as follows. The plasma membrane ATPase of plants and fungi is a hydrogen ion pump. The proton gradient it generates drives the active transport of nutrients by H(+)-symport. The resulting external acidification and/or internal alkinization may mediate growth responses. This chain is Plasma membrane ATPase 4 (PMA4), found in Nicotiana plumbaginifolia (Leadwort-leaved tobacco).